Here is a 113-residue protein sequence, read N- to C-terminus: Large ribosomal subunit protein bL17 (113 aa).

Belongs to the bacterial ribosomal protein bL17 family. Part of the 50S ribosomal subunit. Contacts protein L32.

This is Large ribosomal subunit protein bL17 from Clostridium kluyveri (strain NBRC 12016).